Consider the following 427-residue polypeptide: Protein adenylyltransferase Fic (427 aa).

The chain crosses the membrane as a helical span at residues 17–37; sequence LLLASLAGLSIAIIVTHAPVF. 2 TPR repeats span residues 77–110 and 111–143; these read ALAA…APHH and PEIL…NPLD. The Inhibitory (S/T)XXXE(G/N) motif motif lies at 200–205; the sequence is SNAIEG. ATP contacts are provided by residues Glu-204 and 286–289; that span reads VSDH. The 136-residue stretch at 255–390 folds into the Fido domain; sequence ITIDDIIEIH…IRPFIRFVAR (136 aa). The active site involves His-333. Residues 337 to 344, 369 to 370, and Asn-377 contribute to the ATP site; these read DGNGRTAR and YY.

The protein belongs to the fic family. In terms of assembly, homodimer.

The protein resides in the membrane. It catalyses the reaction L-tyrosyl-[protein] + ATP = O-(5'-adenylyl)-L-tyrosyl-[protein] + diphosphate. It carries out the reaction L-threonyl-[protein] + ATP = 3-O-(5'-adenylyl)-L-threonyl-[protein] + diphosphate. The catalysed reaction is 3-O-(5'-adenylyl)-L-threonyl-[protein] + H2O = L-threonyl-[protein] + AMP + H(+). With respect to regulation, the side chain of Glu-204 determines which of the two opposing activities (AMPylase or de-AMPylase) will take place. In response to endoplasmic reticulum stress, mediates de-AMPylase activity. Adenylyltransferase activity is inhibited by the inhibitory helix present at the N-terminus: Glu-204 binds ATP and competes with ATP-binding at Arg-344, thereby preventing adenylyltransferase activity. In unstressed cells, disengagement of Glu-204 promotes adenylyltransferase activity. Activation dissociates ATP-binding from Glu-204, allowing ordered binding of the entire ATP moiety with the alpha-phosphate in an orientation that is productive for accepting an incoming target hydroxyl side chain. In terms of biological role, protein that can both mediate the addition of adenosine 5'-monophosphate (AMP) to specific residues of target proteins (AMPylation), and the removal of the same modification from target proteins (de-AMPylation), depending on the context. The side chain of Glu-204 determines which of the two opposing activities (AMPylase or de-AMPylase) will take place. Acts as a key regulator of the unfolded protein response (UPR) by mediating AMPylation or de-AMPylation of Hsc70-3/BiP. In unstressed cells, acts as an adenylyltransferase by mediating AMPylation of Hsc70-3/BiP, thereby inactivating it. In response to endoplasmic reticulum stress, acts as a phosphodiesterase by mediating removal of ATP (de-AMPylation) from Hsc70-3/BiP, leading to restore HSPA5/BiP activity. The polypeptide is Protein adenylyltransferase Fic (Nematostella vectensis (Starlet sea anemone)).